The following is a 140-amino-acid chain: L-fucose mutarotase (140 aa).

Catalysis depends on His22, which acts as the Proton donor. Substrate is bound by residues Asp30, Arg107, and 129–131; that span reads YGN.

The protein belongs to the RbsD / FucU family. FucU mutarotase subfamily. Homodecamer.

The protein resides in the cytoplasm. The enzyme catalyses alpha-L-fucose = beta-L-fucose. Its pathway is carbohydrate metabolism; L-fucose metabolism. Functionally, involved in the anomeric conversion of L-fucose. This Salmonella typhimurium (strain LT2 / SGSC1412 / ATCC 700720) protein is L-fucose mutarotase.